We begin with the raw amino-acid sequence, 203 residues long: Small ribosomal subunit protein uS4 (203 aa).

The S4 RNA-binding domain maps to 93 to 156 (RRLDNVVYRL…AKVPAILEAV (64 aa)).

This sequence belongs to the universal ribosomal protein uS4 family. Part of the 30S ribosomal subunit. Contacts protein S5. The interaction surface between S4 and S5 is involved in control of translational fidelity.

Its function is as follows. One of the primary rRNA binding proteins, it binds directly to 16S rRNA where it nucleates assembly of the body of the 30S subunit. Functionally, with S5 and S12 plays an important role in translational accuracy. The sequence is that of Small ribosomal subunit protein uS4 from Streptococcus mutans serotype c (strain ATCC 700610 / UA159).